The following is a 348-amino-acid chain: Phosphate acyltransferase (348 aa).

This sequence belongs to the PlsX family. In terms of assembly, homodimer. Probably interacts with PlsY.

It localises to the cytoplasm. It carries out the reaction a fatty acyl-[ACP] + phosphate = an acyl phosphate + holo-[ACP]. It functions in the pathway lipid metabolism; phospholipid metabolism. Functionally, catalyzes the reversible formation of acyl-phosphate (acyl-PO(4)) from acyl-[acyl-carrier-protein] (acyl-ACP). This enzyme utilizes acyl-ACP as fatty acyl donor, but not acyl-CoA. The chain is Phosphate acyltransferase from Francisella philomiragia subsp. philomiragia (strain ATCC 25017 / CCUG 19701 / FSC 153 / O#319-036).